A 1042-amino-acid chain; its full sequence is Signal-induced proliferation-associated protein 1 (1042 aa).

Disordered stretches follow at residues 1–87 (MPMW…TSTR) and 132–153 (SQGMGSHSEASSGTLASAEDQA). At Thr64 the chain carries Phosphothreonine. The residue at position 67 (Ser67) is a Phosphoserine. Positions 134 to 146 (GMGSHSEASSGTL) are enriched in polar residues. Residues Ser182, Ser304, and Ser314 each carry the phosphoserine modification. A Rap-GAP domain is found at 321–539 (LLTLDEQVLS…RTRQQYLQDL (219 aa)). A PDZ domain is found at 687–763 (ELALPRDGQG…VCVTVLPPDE (77 aa)). Phosphoserine occurs at positions 817, 839, and 912. Positions 830–903 (EFLHSQNSLS…PAPELRASFL (74 aa)) are disordered. Over residues 832-845 (LHSQNSLSPRSSLS) the composition is skewed to low complexity. Residues 946–980 (LSREGQPIPESGDPKGTPKSDAEPEPGNLSEKVSH) form a disordered region. Positions 957-967 (GDPKGTPKSDA) are enriched in basic and acidic residues. Residues 972-1034 (GNLSEKVSHL…TRLLLASKQL (63 aa)) are a coiled coil.

In terms of assembly, interacts with RRP1B; the interaction leads to inhibition of SIPA1 GTPase activity. Expressed in fetal as well as in adult tissues. Expressed abundantly in the lymphoid tissues such as thymus, spleen and peripheral blood lymphocytes and also shows a significant expression in the spinal cord.

It localises to the nucleus. It is found in the cytoplasm. The protein resides in the perinuclear region. Its subcellular location is the endomembrane system. Its function is as follows. GTPase activator for the nuclear Ras-related regulatory proteins Rap1 and Rap2 in vitro, converting them to the putatively inactive GDP-bound state. Affects cell cycle progression. The sequence is that of Signal-induced proliferation-associated protein 1 (SIPA1) from Homo sapiens (Human).